Consider the following 372-residue polypeptide: DNA replication and repair protein RecF (372 aa).

G30–T37 is an ATP binding site.

The protein belongs to the RecF family.

The protein localises to the cytoplasm. Its function is as follows. The RecF protein is involved in DNA metabolism; it is required for DNA replication and normal SOS inducibility. RecF binds preferentially to single-stranded, linear DNA. It also seems to bind ATP. The polypeptide is DNA replication and repair protein RecF (Exiguobacterium sp. (strain ATCC BAA-1283 / AT1b)).